The chain runs to 247 residues: MHTPVLFEHPLNEKMRTWLRIEFLIQQMAFHPQIASHADALHFFRNAGDLLDVLERGEVRTDLVKELERQQRKLQSWAEVPGVDQERINELRHQLKQSSSTLMAAPRIGQFLREDRLIALVRQRLSIPGGCCSFDLPTLHIWLHMPQAHRDEQVASWLASLDPLVQSLSLILDLIRNSALFRKQTSLNGFYQDNGEDADLLRLRLDLAHQLYPQISGHKSRFAIRFLALDSEYGIVPERFDFELACC.

It belongs to the ZapD family. Interacts with FtsZ.

It is found in the cytoplasm. Its function is as follows. Cell division factor that enhances FtsZ-ring assembly. Directly interacts with FtsZ and promotes bundling of FtsZ protofilaments, with a reduction in FtsZ GTPase activity. This chain is Cell division protein ZapD, found in Klebsiella pneumoniae subsp. pneumoniae (strain ATCC 700721 / MGH 78578).